A 360-amino-acid polypeptide reads, in one-letter code: Phospho-N-acetylmuramoyl-pentapeptide-transferase (360 aa).

A run of 10 helical transmembrane segments spans residues 25-45 (RAILSVLTALVLSLWLGPTLI), 73-93 (TMGGVLILAAVLGSSLLWADL), 97-117 (YVWVVLLVTTGFGIVGFVDDY), 128-148 (LIAKWKYFWQSVIASVAAVYL), 168-188 (VMPQLGMLYMLMAYFVIVGTS), 199-219 (GLAIMPTIMVAAALGIFAYVS), 236-256 (TAELLVVCTAIVGAGLGFLWF), 262-282 (LVFMGDVGSLALGAALGIIAI), 288-308 (LVLFIMGGVFVMETLSVMLQV), and 338-358 (VIVRFWILSLIFVLIGLATLK).

It belongs to the glycosyltransferase 4 family. MraY subfamily. Mg(2+) is required as a cofactor.

It localises to the cell inner membrane. It catalyses the reaction UDP-N-acetyl-alpha-D-muramoyl-L-alanyl-gamma-D-glutamyl-meso-2,6-diaminopimeloyl-D-alanyl-D-alanine + di-trans,octa-cis-undecaprenyl phosphate = di-trans,octa-cis-undecaprenyl diphospho-N-acetyl-alpha-D-muramoyl-L-alanyl-D-glutamyl-meso-2,6-diaminopimeloyl-D-alanyl-D-alanine + UMP. The protein operates within cell wall biogenesis; peptidoglycan biosynthesis. Catalyzes the initial step of the lipid cycle reactions in the biosynthesis of the cell wall peptidoglycan: transfers peptidoglycan precursor phospho-MurNAc-pentapeptide from UDP-MurNAc-pentapeptide onto the lipid carrier undecaprenyl phosphate, yielding undecaprenyl-pyrophosphoryl-MurNAc-pentapeptide, known as lipid I. The protein is Phospho-N-acetylmuramoyl-pentapeptide-transferase of Idiomarina loihiensis (strain ATCC BAA-735 / DSM 15497 / L2-TR).